The primary structure comprises 740 residues: Phosphoribosylformylglycinamidine synthase subunit PurL (740 aa).

Histidine 50 is an active-site residue. Residues tyrosine 53 and lysine 92 each coordinate ATP. Glutamate 94 provides a ligand contact to Mg(2+). Residues 95-98 (SHNH) and arginine 117 each bind substrate. Histidine 96 acts as the Proton acceptor in catalysis. Aspartate 118 is a binding site for Mg(2+). Glutamine 241 is a binding site for substrate. Aspartate 269 is a binding site for Mg(2+). 313–315 (ESQ) contributes to the substrate binding site. Positions 495 and 532 each coordinate ATP. Asparagine 533 lines the Mg(2+) pocket. Serine 535 is a binding site for substrate.

This sequence belongs to the FGAMS family. In terms of assembly, monomer. Part of the FGAM synthase complex composed of 1 PurL, 1 PurQ and 2 PurS subunits.

It localises to the cytoplasm. It catalyses the reaction N(2)-formyl-N(1)-(5-phospho-beta-D-ribosyl)glycinamide + L-glutamine + ATP + H2O = 2-formamido-N(1)-(5-O-phospho-beta-D-ribosyl)acetamidine + L-glutamate + ADP + phosphate + H(+). Its pathway is purine metabolism; IMP biosynthesis via de novo pathway; 5-amino-1-(5-phospho-D-ribosyl)imidazole from N(2)-formyl-N(1)-(5-phospho-D-ribosyl)glycinamide: step 1/2. Part of the phosphoribosylformylglycinamidine synthase complex involved in the purines biosynthetic pathway. Catalyzes the ATP-dependent conversion of formylglycinamide ribonucleotide (FGAR) and glutamine to yield formylglycinamidine ribonucleotide (FGAM) and glutamate. The FGAM synthase complex is composed of three subunits. PurQ produces an ammonia molecule by converting glutamine to glutamate. PurL transfers the ammonia molecule to FGAR to form FGAM in an ATP-dependent manner. PurS interacts with PurQ and PurL and is thought to assist in the transfer of the ammonia molecule from PurQ to PurL. The sequence is that of Phosphoribosylformylglycinamidine synthase subunit PurL from Brucella canis (strain ATCC 23365 / NCTC 10854 / RM-666).